The primary structure comprises 233 residues: Large ribosomal subunit protein uL1 (233 aa).

This sequence belongs to the universal ribosomal protein uL1 family. As to quaternary structure, part of the 50S ribosomal subunit.

Functionally, binds directly to 23S rRNA. The L1 stalk is quite mobile in the ribosome, and is involved in E site tRNA release. Its function is as follows. Protein L1 is also a translational repressor protein, it controls the translation of the L11 operon by binding to its mRNA. The protein is Large ribosomal subunit protein uL1 of Shewanella baltica (strain OS185).